We begin with the raw amino-acid sequence, 360 residues long: Mitogen-activated protein kinase 14 (360 aa).

Serine 2 carries the post-translational modification N-acetylserine. Position 2 is a phosphoserine (serine 2). At threonine 16 the chain carries Phosphothreonine. One can recognise a Protein kinase domain in the interval 24 to 308; it reads YQNLSPVGSG…AAQALAHAYF (285 aa). ATP contacts are provided by residues 30–38 and lysine 53; that span reads VGSGAYGSV. The residue at position 53 (lysine 53) is an N6-acetyllysine. The active-site Proton acceptor is aspartate 150. Residue lysine 152 is modified to N6-acetyllysine. Threonine 180 is subject to Phosphothreonine; by MAP2K3, MAP2K4, MAP2K6 and autocatalysis. Position 182 is a phosphotyrosine; by MAP2K3, MAP2K4, MAP2K6 and autocatalysis (tyrosine 182). Threonine 263 is modified (phosphothreonine). Position 323 is a phosphotyrosine; by ZAP70 (tyrosine 323).

Belongs to the protein kinase superfamily. CMGC Ser/Thr protein kinase family. MAP kinase subfamily. In terms of assembly, component of a signaling complex containing at least AKAP13, PKN1, MAPK14, ZAK and MAP2K3. Within this complex, AKAP13 interacts directly with PKN1, which in turn recruits MAPK14, MAP2K3 and ZAK. Binds to a kinase interaction motif within the protein tyrosine phosphatase, PTPRR. This interaction retains MAPK14 in the cytoplasm and prevents nuclear accumulation. Interacts with SPAG9 and GADD45A. Interacts with CDC25B, CDC25C, DUSP1, DUSP10, DUSP16, NP60, SUPT20H and TAB1. Interacts with casein kinase II subunits CSNK2A1 and CSNK2B. Interacts with PPM1D. Interacts with CDK5RAP3; recruits PPM1D to MAPK14 and may regulate its dephosphorylation. Interacts with DUSP2; this interaction does not lead to catalytic activation of DUSP2 and dephosphrylation of MAPK14. It depends on Mg(2+) as a cofactor. Dually phosphorylated on Thr-180 and Tyr-182 by the MAP2Ks MAP2K3/MKK3, MAP2K4/MKK4 and MAP2K6/MKK6 in response to inflammatory cytokines, environmental stress or growth factors, which activates the enzyme. Dual phosphorylation can also be mediated by TAB1-mediated autophosphorylation. TCR engagement in T-cells also leads to Tyr-323 phosphorylation by ZAP70. Dephosphorylated and inactivated by DUPS1, DUSP10 and DUSP16. PPM1D also mediates dephosphorylation and inactivation of MAPK14. Post-translationally, acetylated at Lys-53 and Lys-152 by KAT2B and EP300. Acetylation at Lys-53 increases the affinity for ATP and enhances kinase activity. Lys-53 and Lys-152 are deacetylated by HDAC3. In terms of processing, ubiquitinated. Ubiquitination leads to degradation by the proteasome pathway.

The protein localises to the cytoplasm. It is found in the nucleus. The catalysed reaction is L-seryl-[protein] + ATP = O-phospho-L-seryl-[protein] + ADP + H(+). It catalyses the reaction L-threonyl-[protein] + ATP = O-phospho-L-threonyl-[protein] + ADP + H(+). With respect to regulation, activated by cell stresses such as DNA damage, heat shock, osmotic shock, anisomycin and sodium arsenite, as well as pro-inflammatory stimuli such as bacterial lipopolysaccharide (LPS) and interleukin-1. Activation occurs through dual phosphorylation of Thr-180 and Tyr-182 by either of two dual specificity kinases, MAP2K3/MKK3 or MAP2K6/MKK6, and potentially also MAP2K4/MKK4, as well as by TAB1-mediated autophosphorylation. MAPK14 phosphorylated on both Thr-180 and Tyr-182 is 10-20-fold more active than MAPK14 phosphorylated only on Thr-180, whereas MAPK14 phosphorylated on Tyr-182 alone is inactive. whereas Thr-180 is necessary for catalysis, Tyr-182 may be required for auto-activation and substrate recognition. Phosphorylated at Tyr-323 by ZAP70 in an alternative activation pathway in response to TCR signaling in T-cells. This alternative pathway is inhibited by GADD45A. Inhibited by dual specificity phosphatases, such as DUSP1, DUSP10, and DUSP16. Specifically inhibited by the binding of pyridinyl-imidazole compounds, which are cytokine-suppressive anti-inflammatory drugs (CSAID). SB203580 is an inhibitor of MAPK14. Its function is as follows. Serine/threonine kinase which acts as an essential component of the MAP kinase signal transduction pathway. MAPK14 is one of the four p38 MAPKs which play an important role in the cascades of cellular responses evoked by extracellular stimuli such as pro-inflammatory cytokines or physical stress leading to direct activation of transcription factors. Accordingly, p38 MAPKs phosphorylate a broad range of proteins and it has been estimated that they may have approximately 200 to 300 substrates each. Some of the targets are downstream kinases which are activated through phosphorylation and further phosphorylate additional targets. RPS6KA5/MSK1 and RPS6KA4/MSK2 can directly phosphorylate and activate transcription factors such as CREB1, ATF1, the NF-kappa-B isoform RELA/NFKB3, STAT1 and STAT3, but can also phosphorylate histone H3 and the nucleosomal protein HMGN1. RPS6KA5/MSK1 and RPS6KA4/MSK2 play important roles in the rapid induction of immediate-early genes in response to stress or mitogenic stimuli, either by inducing chromatin remodeling or by recruiting the transcription machinery. On the other hand, two other kinase targets, MAPKAPK2/MK2 and MAPKAPK3/MK3, participate in the control of gene expression mostly at the post-transcriptional level, by phosphorylating ZFP36 (tristetraprolin) and ELAVL1, and by regulating EEF2K, which is important for the elongation of mRNA during translation. MKNK1/MNK1 and MKNK2/MNK2, two other kinases activated by p38 MAPKs, regulate protein synthesis by phosphorylating the initiation factor EIF4E2. MAPK14 also interacts with casein kinase II, leading to its activation through autophosphorylation and further phosphorylation of TP53/p53. In the cytoplasm, the p38 MAPK pathway is an important regulator of protein turnover. For example, CFLAR is an inhibitor of TNF-induced apoptosis whose proteasome-mediated degradation is regulated by p38 MAPK phosphorylation. In a similar way, MAPK14 phosphorylates the ubiquitin ligase SIAH2, regulating its activity towards EGLN3. MAPK14 may also inhibit the lysosomal degradation pathway of autophagy by interfering with the intracellular trafficking of the transmembrane protein ATG9. Another function of MAPK14 is to regulate the endocytosis of membrane receptors by different mechanisms that impinge on the small GTPase RAB5A. In addition, clathrin-mediated EGFR internalization induced by inflammatory cytokines and UV irradiation depends on MAPK14-mediated phosphorylation of EGFR itself as well as of RAB5A effectors. Ectodomain shedding of transmembrane proteins is regulated by p38 MAPKs as well. In response to inflammatory stimuli, p38 MAPKs phosphorylate the membrane-associated metalloprotease ADAM17. Such phosphorylation is required for ADAM17-mediated ectodomain shedding of TGF-alpha family ligands, which results in the activation of EGFR signaling and cell proliferation. Another p38 MAPK substrate is FGFR1. FGFR1 can be translocated from the extracellular space into the cytosol and nucleus of target cells, and regulates processes such as rRNA synthesis and cell growth. FGFR1 translocation requires p38 MAPK activation. In the nucleus, many transcription factors are phosphorylated and activated by p38 MAPKs in response to different stimuli. Classical examples include ATF1, ATF2, ATF6, ELK1, PTPRH, DDIT3, TP53/p53 and MEF2C and MEF2A. The p38 MAPKs are emerging as important modulators of gene expression by regulating chromatin modifiers and remodelers. The promoters of several genes involved in the inflammatory response, such as IL6, IL8 and IL12B, display a p38 MAPK-dependent enrichment of histone H3 phosphorylation on 'Ser-10' (H3S10ph) in LPS-stimulated myeloid cells. This phosphorylation enhances the accessibility of the cryptic NF-kappa-B-binding sites marking promoters for increased NF-kappa-B recruitment. Phosphorylates CDC25B and CDC25C which is required for binding to 14-3-3 proteins and leads to initiation of a G2 delay after ultraviolet radiation. Phosphorylates TIAR following DNA damage, releasing TIAR from GADD45A mRNA and preventing mRNA degradation. The p38 MAPKs may also have kinase-independent roles, which are thought to be due to the binding to targets in the absence of phosphorylation. Protein O-Glc-N-acylation catalyzed by the OGT is regulated by MAPK14, and, although OGT does not seem to be phosphorylated by MAPK14, their interaction increases upon MAPK14 activation induced by glucose deprivation. This interaction may regulate OGT activity by recruiting it to specific targets such as neurofilament H, stimulating its O-Glc-N-acylation. Required in mid-fetal development for the growth of embryo-derived blood vessels in the labyrinth layer of the placenta. Also plays an essential role in developmental and stress-induced erythropoiesis, through regulation of EPO gene expression. Phosphorylates S100A9 at 'Thr-113'. The chain is Mitogen-activated protein kinase 14 from Pan troglodytes (Chimpanzee).